Here is a 920-residue protein sequence, read N- to C-terminus: WD repeat-containing protein 47 (920 aa).

The region spanning 10–42 is the LisH domain; sequence KEVEIIKLILDFLNSKKLHISMLALEKESGVIN. One can recognise a CTLH domain in the interval 45-102; sequence FSDDMLFLRQLILDGQWDEVLQFIQPLECMEKFDKKRFRYIILKQKFLEALCVNNAMS. Thr-285 is subject to Phosphothreonine. 4 positions are modified to phosphoserine: Ser-289, Ser-292, Ser-297, and Ser-312. The span at 371 to 380 shows a compositional bias: basic and acidic residues; that stretch reads YEESPERSDT. Residues 371–422 form a disordered region; the sequence is YEESPERSDTPVEAQQPVSSEAMCQGSGLEKEPANGAQNPVPAKQEKNELRD. Position 423 is a phosphoserine (Ser-423). The tract at residues 501–594 is disordered; the sequence is LNQQCSGSKN…RSKGEEDDKS (94 aa). Low complexity predominate over residues 506 to 523; sequence SGSKNNGSNNSSVTSFST. The span at 538-552 shows a compositional bias: polar residues; sequence NIHTSTPRNPGSTNH. Residue Thr-543 is modified to Phosphothreonine. 7 WD repeats span residues 605 to 644, 660 to 699, 707 to 749, 754 to 792, 799 to 838, 841 to 880, and 887 to 919; these read EDTQ…DASA, HHKG…CNAT, MHDG…GQGL, GHTG…CVRV, GTGS…MVQS, PHSS…TKQL, and EHKD…WTYS.

Interacts with MAP1S (via WD repeats). As to expression, enriched in the nervous system (at protein level).

It localises to the cytoplasm. It is found in the cytoskeleton. The polypeptide is WD repeat-containing protein 47 (Wdr47) (Mus musculus (Mouse)).